The sequence spans 531 residues: RNA-binding protein RO60 (531 aa).

A TROVE domain is found at 24–360 (VRNNAGGFVY…AFGNVQPANT (337 aa)). The segment at 128-274 (RTGTMLLHFL…TNGLTWLLRN (147 aa)) is RNA-binding. The segment at 352 to 531 (FGNVQPANTR…VMTAFARGEV (180 aa)) is VWFA-like domain. A divalent metal cation-binding residues include Ser-369, Ser-371, and Thr-438.

The protein belongs to the Ro 60 kDa family. As to quaternary structure, forms oligomers upon binding DrY RNA, The multimers are of an average size of 700 kDa and are composed of around 12 molecules of Rsr-DrY RNA.

The protein localises to the cytoplasm. In terms of biological role, binds to several small RNAs that accumulate during recovery from UV irradiation. Contributes to the resistance of D.radiodurans to ultraviolet irradiation. This chain is RNA-binding protein RO60, found in Deinococcus radiodurans (strain ATCC 13939 / DSM 20539 / JCM 16871 / CCUG 27074 / LMG 4051 / NBRC 15346 / NCIMB 9279 / VKM B-1422 / R1).